The following is a 342-amino-acid chain: MVSVKKIVASALVGVLMFSAVGCNMVEKTQAAIDKTTVATVNGEKITLGEVDSHLKGVFTQMKSQYGDKYMDDPQVAQQILQQRQGILNSLVEEKILVVEANKENIVPSEEELNKKIEQQIKLYKEQYGEEGYKKAVESMGYNEDTFKEYLKNQFIADAAASNASKDIKVTDEEAQKYYDENKKQFEVQAKGVLARHLLFENEEEAQKAYDEIQSGKTTFNDLFTKYENNKLEKKTPIAESFVVPDENAQVAKEFVEGLKSLKEGEISKPIKTQFGYHIIQAGATYEKGAQLPFNEVKSQIIQILKQQKDSQKLKSDMDQWKKDLNVKVYDDKLQEGLKISK.

Positions 1 to 22 are cleaved as a signal peptide; the sequence is MVSVKKIVASALVGVLMFSAVG. C23 carries the N-palmitoyl cysteine lipid modification. C23 carries S-diacylglycerol cysteine lipidation. One can recognise a PpiC domain in the interval 190–284; it reads AKGVLARHLL…FGYHIIQAGA (95 aa).

Belongs to the PrsA family.

The protein localises to the cell membrane. The enzyme catalyses [protein]-peptidylproline (omega=180) = [protein]-peptidylproline (omega=0). Its function is as follows. Plays a major role in protein secretion by helping the post-translocational extracellular folding of several secreted proteins. The chain is Foldase protein PrsA from Clostridium perfringens (strain SM101 / Type A).